Reading from the N-terminus, the 341-residue chain is 2-acylglycerol O-acyltransferase 3 (341 aa).

The next 2 membrane-spanning stretches (helical) occupy residues 29-49 (YVLT…VLLF) and 50-70 (TSLW…WDTP). Residue Asn126 is glycosylated (N-linked (GlcNAc...) asparagine). A helical membrane pass occupies residues 137–157 (LFPGLRPWLAVLAGLFYLPVY).

Belongs to the diacylglycerol acyltransferase family. Post-translationally, ubiquitinated. Ubiquitination leads to proteasomal degradation. Selectively expressed in the digestive system. Highly expressed in the ileum, and at lower level in jejunum, duodenum, colon, cecum and the rectum. Not expressed in the stomach and the esophagus and trachea. Expressed at very low level in liver.

The protein localises to the endoplasmic reticulum membrane. It localises to the cytoplasm. The protein resides in the perinuclear region. It carries out the reaction a 2-acylglycerol + an acyl-CoA = a 1,2-diacylglycerol + CoA. The catalysed reaction is an acyl-CoA + a 1,2-diacyl-sn-glycerol = a triacyl-sn-glycerol + CoA. The enzyme catalyses 2-(9Z-octadecenoyl)-glycerol + (9Z)-octadecenoyl-CoA = 1,2-di-(9Z-octadecenoyl)-sn-glycerol + CoA. It catalyses the reaction 2-(9Z-octadecenoyl)-glycerol + hexadecanoyl-CoA = 1-hexadecanoyl-2-(9Z-octadecenoyl)-sn-glycerol + CoA. It carries out the reaction 1,2-di-(9Z-octadecenoyl)-sn-glycerol + (9Z)-octadecenoyl-CoA = 1,2,3-tri-(9Z-octadecenoyl)-glycerol + CoA. The catalysed reaction is 1-hexadecanoyl-2-(9Z-octadecenoyl)-sn-glycerol + hexadecanoyl-CoA = 1,3-dihexadecanoyl-2-(9Z-octadecenoyl)glycerol + CoA. The enzyme catalyses all-trans-retinol + hexadecanoyl-CoA = all-trans-retinyl hexadecanoate + CoA. It catalyses the reaction 1-O-(9Z-octadecenyl)-glycerol + (9Z)-octadecenoyl-CoA = 1-O-(9Z-octadecyl)-3-(9Z-octadecenoyl)-glycerol + CoA. It carries out the reaction 1-O-(9Z-octadecyl)-3-(9Z-octadecenoyl)-glycerol + (9Z)-octadecenoyl-CoA = 1-O-(9Z-octadecenyl)-2,3-di-(9Z-octadecenoyl)glycerol + CoA. Its pathway is glycerolipid metabolism; triacylglycerol biosynthesis. Catalyzes the formation of diacylglycerol from 2-monoacylglycerol and fatty acyl-CoA. Also able to catalyze the terminal step in triacylglycerol synthesis by using diacylglycerol and fatty acyl-CoA as substrates. Has a preference toward palmitoyl-CoA and oleoyl-CoA. May be involved in absorption of dietary fat in the small intestine by catalyzing the resynthesis of triacylglycerol in enterocytes. Also able to use 1-monoalkylglycerol (1-MAkG) as an acyl acceptor for the synthesis of monoalkyl-monoacylglycerol (MAMAG). In Homo sapiens (Human), this protein is 2-acylglycerol O-acyltransferase 3.